The following is a 224-amino-acid chain: Large ribosomal subunit protein uL4 (224 aa).

The disordered stretch occupies residues 52–109 (AAARQGTHSTKTRGDVSGGGRKPYRQKGTGRARQGSTRTPQFTGGGVVHGPKPRDYSQ).

The protein belongs to the universal ribosomal protein uL4 family. In terms of assembly, part of the 50S ribosomal subunit.

One of the primary rRNA binding proteins, this protein initially binds near the 5'-end of the 23S rRNA. It is important during the early stages of 50S assembly. It makes multiple contacts with different domains of the 23S rRNA in the assembled 50S subunit and ribosome. Functionally, forms part of the polypeptide exit tunnel. This Mycobacterium ulcerans (strain Agy99) protein is Large ribosomal subunit protein uL4.